A 512-amino-acid polypeptide reads, in one-letter code: Cytochrome P450 72A15 (512 aa).

The helical transmembrane segment at 2–22 (EISVASVTISVVLAVVSWWIW) threads the bilayer. Cys-460 contacts heme.

The protein belongs to the cytochrome P450 family. Heme serves as cofactor.

It localises to the membrane. The sequence is that of Cytochrome P450 72A15 (CYP72A15) from Arabidopsis thaliana (Mouse-ear cress).